Here is a 1346-residue protein sequence, read N- to C-terminus: Pikromycin polyketide synthase component PikAIV (1346 aa).

The stretch at 3-32 forms a coiled coil; that stretch reads SSNEQLVDALRASLKENEELRKESRRRADR. A Ketosynthase family 3 (KS3) domain is found at 34–461; that stretch reads QEPMAIVGMS…GTNAHVVLEE (428 aa). The interval 37-1332 is module 6; that stretch reads MAIVGMSCRF…HAPAVAEAVL (1296 aa). Residues Cys207, His342, and His382 each act as for beta-ketoacyl synthase activity in the active site. The acyltransferase stretch occupies residues 562–844; the sequence is FVFPGQGTQW…VLTMTLPDKV (283 aa). Ser652 functions as the Acyl-ester intermediate; for acyltransferase activity in the catalytic mechanism. Residues 945–1020 form the Carrier domain; the sequence is SAVLAMVMRQ…ALAERISDEL (76 aa). Ser980 bears the O-(pantetheine 4'-phosphoryl)serine mark. The disordered stretch occupies residues 1028–1050; it reads AEPSDHEQAEEEKAAAPAGARSG. Over residues 1030 to 1041 the composition is skewed to basic and acidic residues; that stretch reads PSDHEQAEEEKA. Thr1125 provides a ligand contact to substrate. Residues 1127-1332 are thioesterase; the sequence is ANGGPHEFLR…HAPAVAEAVL (206 aa). Ser1196 (nucleophile; for thioesterase activity) is an active-site residue. Substrate is bound by residues Gly1197 and Asp1224. Residue His1316 is the Proton acceptor; for thioesterase activity of the active site.

As to quaternary structure, homodimer. Pikromycin PKS consists of a combination of multimodular (PikAI and PikAII) and monomodular (PikAIII and PikAIV) polypeptides each coding for a functional synthase subunit which participates in 1 (monomodular) or 2 (multimodular) of the six FAS-like elongation steps required for formation of the polyketide. Module 1, 2, 3, 4, 5, and 6 participating in biosynthesis steps 1, 2, 3, 4, 5, and 6, respectively. The cofactor is pantetheine 4'-phosphate.

It carries out the reaction 5 (S)-methylmalonyl-CoA + malonyl-CoA + 5 NADPH + 11 H(+) = 10-deoxymethynolide + 6 CO2 + 5 NADP(+) + 6 CoA + 2 H2O. The enzyme catalyses 6 (S)-methylmalonyl-CoA + malonyl-CoA + 5 NADPH + 12 H(+) = narbonolide + 7 CO2 + 5 NADP(+) + 7 CoA + 2 H2O. It participates in antibiotic biosynthesis. With respect to regulation, irreversibly inhibited by (2S,3R,4S)-2,4-dihydroxy-3-methylhexyl-phosphonic acid and (3R,4S)-4-hydroxy-3-methyl-2-oxohexyl-phosphonic acid. Involved in the biosynthesis of 12- and 14-membered ring macrolactone antibiotics such as methymycin and neomethymycin, and pikromycin and narbomycin, respectively. Component of the pikromycin PKS which catalyzes the biosynthesis of both precursors 10-deoxymethynolide (12-membered ring macrolactone) and narbonolide (14-membered ring macrolactone). Chain elongation through PikAI, PikAII and PikAIII followed by thioesterase catalyzed termination results in the production of 10-deoxymethynolide, while continued elongation through PikAIV, followed by thioesterase (TE) catalyzed cyclization results in the biosynthesis of the narbonolide. The thioesterase can use a series of diketide-N-acetylcysteamine (SNAC) thioesters, but has a strong preference for the 2-methyl-3-ketopentanoyl-SNAC over the stereoisomers of 2-methyl-3-hydroxyacyl-SNAC. In Streptomyces venezuelae, this protein is Pikromycin polyketide synthase component PikAIV.